A 242-amino-acid chain; its full sequence is Probable septum site-determining protein MinC (242 aa).

Belongs to the MinC family. As to quaternary structure, interacts with MinD and FtsZ.

In terms of biological role, cell division inhibitor that blocks the formation of polar Z ring septums. Rapidly oscillates between the poles of the cell to destabilize FtsZ filaments that have formed before they mature into polar Z rings. Prevents FtsZ polymerization. In Agrobacterium fabrum (strain C58 / ATCC 33970) (Agrobacterium tumefaciens (strain C58)), this protein is Probable septum site-determining protein MinC.